The following is a 96-amino-acid chain: Bacterial microcompartment shell protein EutM (96 aa).

In terms of domain architecture, BMC spans 3-87 (ALGMIETRGL…PHGDLEEVFP (85 aa)).

This sequence belongs to the bacterial microcompartments protein family. As to quaternary structure, homohexamer with a central pore of up to 8.6 Angstroms diameter. The hexamers pack into a two-dimensional array. Interacts with EutQ; a probably cytoplasm-facing helix (Val-49 to Gln-64) interacts with N-terminus of EutQ.

The protein resides in the bacterial microcompartment. The protein operates within amine and polyamine degradation; ethanolamine degradation. Functionally, probably a major component of the bacterial microcompartment (BMC) shell dedicated to ethanolamine degradation. Each homohexamer has a central pore with an opening of up to 8.6 Angstroms. A positively-charged funnel leads to the pore from each side of the hexamer. The pore probably allows metabolite passage into and out of the BMC. Expression of eutK, eutL, eutM, eutN, eutS (eutSMNLK) in E.coli leads to formation of a single BMC. Expression alone leads to thick filaments that interfere with cell separation. Coexpression of eutQ with eutSMNLK permits E.coli to make cells with more than one mobile BMC, as is usual in vivo. May play a role in BMC shell biogenesis. Can replace homolog pduA in the pdu operon, cells grow better than wild-type on 1,2-propanediol and vitamin B12. Protein is incorporated into the pdu BMC microcompartment. Its function is as follows. The ethanolamine (EA) catabolic bacterial microcompartment (BMC) probably concentrates low levels of ethanolamine catabolic enzymes, concentrates volatile reaction intermediates, keeps the level of toxic acetaldehyde low, generates enough acetyl-CoA to support cell growth, and maintains a pool of free coenzyme A (CoA) and NAD. Deletion of BMC genes (eutK, eutL, eutM) restores growth of eutD deletions, suggesting there are dedicated pools of coenzyme A (CoA) and NAD in the BMC. Expression of the eut operon allows this bacteria to use ethanolamine as a carbon, nitrogen and energy source. It relies on cobalamin (vitamin B12) both as a cofactor for the ethanolamine ammonia-lyase (EAL) activity and to induce the operon. EA enhances bacterial survival in macrophages in a concentration-dependent manner, suggesting it is an important nutrient during infection. The polypeptide is Bacterial microcompartment shell protein EutM (Salmonella typhimurium (strain LT2 / SGSC1412 / ATCC 700720)).